The chain runs to 507 residues: Lysine--tRNA ligase (507 aa).

The 'HIGH' region signature appears at 26–34 (PSGPIHVGN). The 'KMSKS' region motif lies at 270–274 (AMHSS).

It belongs to the class-I aminoacyl-tRNA synthetase family.

Its subcellular location is the cytoplasm. It carries out the reaction tRNA(Lys) + L-lysine + ATP = L-lysyl-tRNA(Lys) + AMP + diphosphate. The chain is Lysine--tRNA ligase (lysS) from Thermoplasma acidophilum (strain ATCC 25905 / DSM 1728 / JCM 9062 / NBRC 15155 / AMRC-C165).